Consider the following 240-residue polypeptide: Fibronectin type III domain-containing protein 5 (240 aa).

Residues 1-10 are compositionally biased toward gly residues; sequence MQAARGGAGR. The interval 1–30 is disordered; the sequence is MQAARGGAGRPGREGRGLERECERSPGVGA. The segment covering 11–24 has biased composition (basic and acidic residues); sequence PGREGRGLERECER. Residues 64-155 form the Fibronectin type-III domain; the sequence is APVNVTVRHL…EPVLFKTPRE (92 aa). N-linked (GlcNAc...) asparagine glycans are attached at residues asparagine 67 and asparagine 112. A helical transmembrane segment spans residues 181 to 201; it reads GEVLIIVVVLFMWAGVIALFC. The span at 210–221 shows a compositional bias: basic and acidic residues; sequence NEPNNNKEKTKS. Positions 210–240 are disordered; that stretch reads NEPNNNKEKTKSASETSTPEHQGGGLLRSKI. Residues 231 to 240 are compositionally biased toward gly residues; it reads QGGGLLRSKI. The Microbody targeting signal signature appears at 238–240; sequence SKI.

Dimer; may exist in other oligomeric forms. In terms of processing, N-Glycosylated. The extracellular domain is cleaved and released from the cell membrane.

The protein resides in the cell membrane. It is found in the peroxisome membrane. It localises to the secreted. In terms of biological role, mediates beneficial effects of muscular exercise. Induces browning of white adipose tissue by stimulating UCP1 expression, at least in part, via the nuclear receptor PPARA. This is Fibronectin type III domain-containing protein 5 (Fndc5) from Rattus norvegicus (Rat).